The following is a 267-amino-acid chain: Alpha-tubulin N-acetyltransferase (267 aa).

The 197-residue stretch at 1–197 folds into the N-acetyltransferase domain; the sequence is MDFRAGLENV…NNFVVYSEFF (197 aa). Residues 131 to 144 and 167 to 176 contribute to the acetyl-CoA site; these read FYIH…GYGK and SMKMIQFLHK.

This sequence belongs to the acetyltransferase ATAT1 family.

The catalysed reaction is L-lysyl-[alpha-tubulin] + acetyl-CoA = N(6)-acetyl-L-lysyl-[alpha-tubulin] + CoA + H(+). In terms of biological role, specifically acetylates 'Lys-40' in alpha-tubulin on the lumenal side of microtubules. Promotes microtubule destabilization and accelerates microtubule dynamics; this activity may be independent of acetylation activity. Acetylates alpha-tubulin with a slow enzymatic rate, due to a catalytic site that is not optimized for acetyl transfer. Enters the microtubule through each end and diffuses quickly throughout the lumen of microtubules. Acetylates only long/old microtubules because of its slow acetylation rate since it does not have time to act on dynamically unstable microtubules before the enzyme is released. The chain is Alpha-tubulin N-acetyltransferase from Schistosoma japonicum (Blood fluke).